A 243-amino-acid polypeptide reads, in one-letter code: UPF0246 protein Spy49_1742 (243 aa).

This sequence belongs to the UPF0246 family.

This Streptococcus pyogenes serotype M49 (strain NZ131) protein is UPF0246 protein Spy49_1742.